We begin with the raw amino-acid sequence, 156 residues long: Small ribosomal subunit protein uS7 (156 aa).

Belongs to the universal ribosomal protein uS7 family. Part of the 30S ribosomal subunit. Contacts proteins S9 and S11.

One of the primary rRNA binding proteins, it binds directly to 16S rRNA where it nucleates assembly of the head domain of the 30S subunit. Is located at the subunit interface close to the decoding center, probably blocks exit of the E-site tRNA. In Paraburkholderia phymatum (strain DSM 17167 / CIP 108236 / LMG 21445 / STM815) (Burkholderia phymatum), this protein is Small ribosomal subunit protein uS7.